The following is a 761-amino-acid chain: Complement factor B (761 aa).

Positions 1 to 22 are cleaved as a signal peptide; that stretch reads MESPQLCLVLLVLGFSSGGVSA. Sushi domains lie at 32–97, 98–157, and 160–217; these read VSCS…ECRA, IRCP…ICDD, and GYCP…SCQD. Cystine bridges form between Cys-34/Cys-73, Cys-59/Cys-95, Cys-100/Cys-142, Cys-128/Cys-155, Cys-162/Cys-202, and Cys-188/Cys-215. N-linked (GlcNAc...) asparagine glycosylation is found at Asn-119 and Asn-139. Residues 267 to 466 form the VWFA domain; that stretch reads NIYLVLDGSD…DLENVFYQMI (200 aa). Mg(2+) contacts are provided by Ser-275 and Ser-277. N-linked (GlcNAc...) asparagine glycosylation occurs at Asn-282. Thr-350 is a Mg(2+) binding site. The N-linked (GlcNAc...) asparagine glycan is linked to Asn-375. In terms of domain architecture, Peptidase S1 spans 474–754; it reads LCGMVWEHKK…VLPWLKDKLK (281 aa). 5 disulfides stabilise this stretch: Cys-475-Cys-593, Cys-508-Cys-524, Cys-596-Cys-612, Cys-653-Cys-679, and Cys-692-Cys-722. Catalysis depends on charge relay system residues His-523 and Asp-573. Ser-696 functions as the Charge relay system in the catalytic mechanism.

It belongs to the peptidase S1 family. Monomer. Interacts with complement C3b; this interaction is dependent on the presence of Mg(2+). In terms of assembly, catalytic component of the C3 convertase of the alternative complement pathway, also named C3bBb, composed of complement factor B Bb and complement C3b. Catalytic component of the C5 convertase of the alternative complement pathway, also named C3bBb3b, composed of complement factor B Bb and additional molecules of complement C3b. Interacts to CFP; this interaction contributes to the stabilization of the active C3-convertase enzyme complex. It depends on Mg(2+) as a cofactor. Mn(2+) is required as a cofactor. Cleaved by CFD following activation of the alternative complement system, generating Ba and Bb chains. Cleavage and activation takes place when CFB is already associated with complement C3b.

It is found in the secreted. Its subcellular location is the cell surface. The enzyme catalyses Cleavage of Arg-|-Ser bond in complement component C3 alpha-chain to yield C3a and C3b, and Arg-|-Xaa bond in complement component C5 alpha-chain to yield C5a and C5b.. Precursor of the catalytic component of the C3 and C5 convertase complexes of the alternative pathway of the complement system, a cascade of proteins that leads to phagocytosis and breakdown of pathogens and signaling that strengthens the adaptive immune system. The alternative complement pathway acts as an amplification loop that enhances other complement pathways (classical, lectin and GZMK) by promoting formation of additional C3 and C5 convertases. CFB is cleaved and activated by CFD to generate Ba and Bb chains; Bb chain constituting the catalytic component of the C3 and C5 convertases. Its function is as follows. Serine protease component of the complement C3 and C5 convertase complexes of the alternative complement pathway. Following cleavage and activation by factor D (CFD), forms the C3 convertase together with complement C3b. As part of the C3 convertase, cleaves and activates C3 into C3a anaphylatoxin and C3b opsonin, the next components of the complement pathways. When an additional complement C3b molecule binds to the C3 convertase, forms the C5 convertase, which cleaves and activates C5 into C5a anaphylatoxin and C5b component of the membrane attack complex. Functionally, involved in proliferation and differentiation of preactivated B-lymphocytes, rapid spreading of peripheral blood monocytes, stimulation of lymphocyte blastogenesis and lysis of erythrocytes. The sequence is that of Complement factor B (Cfb) from Mus musculus (Mouse).